A 365-amino-acid polypeptide reads, in one-letter code: sn-glycerol-3-phosphate import ATP-binding protein UgpC (365 aa).

An ABC transporter domain is found at 4 to 234; that stretch reads LSLRNVQKHY…PASTFVAGFI (231 aa). Position 36–43 (36–43) interacts with ATP; that stretch reads GPSGCGKS.

Belongs to the ABC transporter superfamily. sn-glycerol-3-phosphate importer (TC 3.A.1.1.3) family. The complex is composed of two ATP-binding proteins (UgpC), two transmembrane proteins (UgpA and UgpE) and a solute-binding protein (UgpB).

It localises to the cell inner membrane. It catalyses the reaction sn-glycerol 3-phosphate(out) + ATP + H2O = sn-glycerol 3-phosphate(in) + ADP + phosphate + H(+). Part of the ABC transporter complex UgpBAEC involved in sn-glycerol-3-phosphate (G3P) import. Responsible for energy coupling to the transport system. The sequence is that of sn-glycerol-3-phosphate import ATP-binding protein UgpC from Ralstonia nicotianae (strain ATCC BAA-1114 / GMI1000) (Ralstonia solanacearum).